The chain runs to 159 residues: Cyclic pyranopterin monophosphate synthase (159 aa).

Substrate contacts are provided by residues 76–78 and 114–115; these read MCH and ME. D129 is a catalytic residue.

The protein belongs to the MoaC family. As to quaternary structure, homohexamer; trimer of dimers.

The enzyme catalyses (8S)-3',8-cyclo-7,8-dihydroguanosine 5'-triphosphate = cyclic pyranopterin phosphate + diphosphate. It participates in cofactor biosynthesis; molybdopterin biosynthesis. Catalyzes the conversion of (8S)-3',8-cyclo-7,8-dihydroguanosine 5'-triphosphate to cyclic pyranopterin monophosphate (cPMP). This chain is Cyclic pyranopterin monophosphate synthase, found in Natranaerobius thermophilus (strain ATCC BAA-1301 / DSM 18059 / JW/NM-WN-LF).